A 318-amino-acid polypeptide reads, in one-letter code: MSRPIILDCDPGHDDAIALILALAHPELNPLAVTTSAGNQTPDKTLNNALRILTLLNRSDIPVAGGAVKPLSRELMIADNVHGETGLDGPALPAPSFQPQAVNAVELMAEKIRQSDKPVTLVPTGPLTNIALLLASHGELHAKIERIVLMGGAAGVGNWTPAAEFNIFVDPEAADIVFKSGIPITMCGLDVTHQAQIMDEDIERIRAIPNPVAKCVAELLDFFMIYHRDPKWGFVGAPLHDPCTIAWLLNPALFDAQDCWVGIETQSELTLGMTVVDRYQLTGKPTNATVLFGIDRQGFVDLLVDSLAVYTPTYLNRR.

Histidine 240 is a catalytic residue.

It belongs to the IUNH family. RihA subfamily.

In terms of biological role, hydrolyzes cytidine or uridine to ribose and cytosine or uracil, respectively. The chain is Pyrimidine-specific ribonucleoside hydrolase RihA from Shewanella sp. (strain MR-4).